A 532-amino-acid chain; its full sequence is Intercellular adhesion molecule 1 (532 aa).

An N-terminal signal peptide occupies residues 1–27 (MAPSGPQPALPILVVLLGALLLGPGNA). The Extracellular segment spans residues 28 to 480 (QTSVFPPEVI…TVNVLSPRYE (453 aa)). Ig-like C2-type domains lie at 41 to 103 (GGSV…QSSA) and 128 to 193 (GKNL…LDLR). N47 carries N-linked (GlcNAc...) asparagine glycosylation. Cystine bridges form between C48–C92 and C52–C96. N130 and N145 each carry an N-linked (GlcNAc...) asparagine glycan. A disulfide bond links C135 and C186. Residues 152-154 (RGE) carry the Cell attachment site; atypical motif. N-linked (GlcNAc...) asparagine glycosylation is found at N183, N202, N267, N296, and N316. One can recognise an Ig-like C2-type 3 domain in the interval 230-297 (DTQGTVVCSL…LLCGVMLGNQ (68 aa)). C237 and C290 are joined by a disulfide. One can recognise an Ig-like C2-type 4 domain in the interval 325 to 378 (GTEVIVECEAHPRAKVMLNGVPAQPPGPRAQFLLKATPEDNGRSFSCSATLEVA). C332 and C371 form a disulfide bridge. 2 N-linked (GlcNAc...) asparagine glycosylation sites follow: N385 and N406. 3 cysteine pairs are disulfide-bonded: C403–C419, C419–C457, and C431–C457. The Ig-like C2-type 5 domain maps to 412–464 (NSQQTPMCQAWGNPLPQLKCLKDGTFPLPIGQSVTVTRDLEGTYLCQARSTRG). The helical transmembrane segment at 481 to 503 (VVIIPVVAAAVILGTAGVATYLY) threads the bilayer. Topologically, residues 504–532 (NRQRKIRKYRLQQAQNGTPMKPNTQATPP) are cytoplasmic. Residues 513 to 532 (RLQQAQNGTPMKPNTQATPP) form a disordered region. Positions 515 to 532 (QQAQNGTPMKPNTQATPP) are enriched in polar residues. 2 positions are modified to phosphothreonine: T521 and T530.

The protein belongs to the immunoglobulin superfamily. ICAM family. Homodimer. Interacts with MUC1 and promotes cell aggregation in epithelial cells. Interacts with ARHGEF26/SGEF. Interacts (on T cell side) with CD81, CD247 and CD9 at immunological synapses between antigen-presenting cells and T cells. Monoubiquitinated, which is promoted by MARCH9 and leads to endocytosis.

The protein resides in the membrane. Functionally, ICAM proteins are ligands for the leukocyte adhesion protein LFA-1 (integrin alpha-L/beta-2). During leukocyte trans-endothelial migration, ICAM1 engagement promotes the assembly of endothelial apical cups through ARHGEF26/SGEF and RHOG activation. In Macaca mulatta (Rhesus macaque), this protein is Intercellular adhesion molecule 1 (ICAM1).